The chain runs to 228 residues: uncharacterized protein (228 aa).

The Response regulatory domain occupies 5-119 (HILIVEDEEK…ELLARIRAAL (115 aa)). 4-aspartylphosphate is present on Asp54. Residues 130-228 (GTFLTYDDLR…IRGVGYAIKG (99 aa)) constitute a DNA-binding region (ompR/PhoB-type).

Post-translationally, phosphorylated by YkoH.

It localises to the cytoplasm. Functionally, probable member of the two-component regulatory system YkoH/YkoG. This is an uncharacterized protein from Bacillus subtilis (strain 168).